We begin with the raw amino-acid sequence, 336 residues long: Corrinoid adenosyltransferase PduO (336 aa).

Residues 1-185 (MAIYTRTGDA…IIREVSKRYL (185 aa)) form a pduON region. Positions 194-336 (KETTPVALSF…IAAINVGTHQ (143 aa)) are pduOC. Histidine 207 serves as a coordination point for heme. Residues glutamate 215 and glutamine 218 each contribute to the Mg(2+) site.

Belongs to the Cob(I)alamin adenosyltransferase family. PduO subfamily. As to quaternary structure, the C-terminal domain (PduOC) forms stable octamers and also crystallizes as an octamer. Forms a complex with PduS. Heme b is required as a cofactor. It depends on Mg(2+) as a cofactor.

It is found in the bacterial microcompartment. It catalyses the reaction cob(I)alamin-[corrinoid adenosyltransferase] + ATP = apo-[corrinoid adenosyltransferase] + adenosylcob(III)alamin + triphosphate. It participates in polyol metabolism; 1,2-propanediol degradation. It functions in the pathway cofactor biosynthesis; adenosylcobalamin biosynthesis. Its activity is regulated as follows. Inhibited by ADP but not significantly by other nucleotides, inhibited by diphosphate and less well by triphosphate. Functionally, converts cob(I)alamin to adenosylcobalamin (adenosylcob(III)alamin), the cofactor for propanediol dehydratase. Found in the bacterial microcompartment (BMC) dedicated to 1,2-propanediol (1,2-PD) degradation. For adenosylcobalamin synthesis dATP can replace ATP, but no other nucleotides will substitute. PduS and PduO allow regeneration of the adenosylcobalamin cofactor within the BMC. The 1,2-PD-specific bacterial microcompartment (BMC) concentrates low levels of 1,2-PD catabolic enzymes, concentrates volatile reaction intermediates thus enhancing pathway flux and keeps the level of toxic, mutagenic propionaldehyde low. In Salmonella typhimurium (strain LT2 / SGSC1412 / ATCC 700720), this protein is Corrinoid adenosyltransferase PduO.